The following is a 472-amino-acid chain: 3-isopropylmalate dehydratase large subunit (472 aa).

Residues Cys-347, Cys-409, and Cys-412 each coordinate [4Fe-4S] cluster.

It belongs to the aconitase/IPM isomerase family. LeuC type 1 subfamily. As to quaternary structure, heterodimer of LeuC and LeuD. Requires [4Fe-4S] cluster as cofactor.

It catalyses the reaction (2R,3S)-3-isopropylmalate = (2S)-2-isopropylmalate. It participates in amino-acid biosynthesis; L-leucine biosynthesis; L-leucine from 3-methyl-2-oxobutanoate: step 2/4. Catalyzes the isomerization between 2-isopropylmalate and 3-isopropylmalate, via the formation of 2-isopropylmaleate. This is 3-isopropylmalate dehydratase large subunit from Salinibacter ruber (strain DSM 13855 / M31).